The primary structure comprises 249 residues: Small ribosomal subunit protein uS4m (249 aa).

An S4 RNA-binding domain is found at 133 to 193; that stretch reads RRLDIIIYRA…PEIVNLLRNQ (61 aa).

This sequence belongs to the universal ribosomal protein uS4 family.

The protein localises to the mitochondrion. The chain is Small ribosomal subunit protein uS4m (RPS4) from Reclinomonas americana.